The following is a 140-amino-acid chain: CDGSH iron-sulfur domain-containing protein 2 homolog (140 aa).

Topologically, residues 1-35 (MEAIAKLIKVQLPNYLQKLPVPSSLSGFAELSPSD) are lumenal. The helical transmembrane segment at 36–59 (AIAVVFPFAVVSWLIGYSTYKFFQ) threads the bilayer. Residues 60-140 (PKAVELPPSP…GPLIVKGKAN (81 aa)) lie on the Cytoplasmic side of the membrane. Positions 104, 106, 115, and 119 each coordinate [2Fe-2S] cluster.

It belongs to the CISD protein family. CISD2 subfamily. It depends on [2Fe-2S] cluster as a cofactor.

Its subcellular location is the endoplasmic reticulum membrane. This chain is CDGSH iron-sulfur domain-containing protein 2 homolog, found in Trichoplax adhaerens (Trichoplax reptans).